The following is a 236-amino-acid chain: Small ribosomal subunit protein uS2c (236 aa).

It belongs to the universal ribosomal protein uS2 family.

Its subcellular location is the plastid. This chain is Small ribosomal subunit protein uS2c (rps2), found in Cuscuta obtusiflora (Peruvian dodder).